Here is a 192-residue protein sequence, read N- to C-terminus: Acetyltransferase PA3944 (192 aa).

Residues 18–187 (LLLRAWRDSD…RHILYRVDAA (170 aa)) enclose the N-acetyltransferase domain. CoA contacts are provided by residues 105 to 107 (WRL), G113, N145, and 150 to 152 (GLM).

In terms of biological role, catalyzes the transfer of an acetyl group from acetyl coenzyme A (AcCoA) to an acceptor substrate and releases both CoA and the acetylated product. It prefers the peptide Asp-Phe methyl ester (or aspartame) and the peptide antibiotics polymyxin B and colistin. Other substrates like dopamine, serotonin, puromycin, chloramphenicol, D-glucosamine, glycine and N-alpha-acetyl-L-glutamine are used and displayed lower activity. The chain is Acetyltransferase PA3944 from Pseudomonas aeruginosa (strain ATCC 15692 / DSM 22644 / CIP 104116 / JCM 14847 / LMG 12228 / 1C / PRS 101 / PAO1).